The following is a 99-amino-acid chain: MSSTATPTPSNVVLVGKKPVMNYVLAALTLLNQGVSEIIIKARGRAISKAVDTVEIVRNRFLPDKIEVKEIRIGSQVVTSQDGRQSRVSTIEIAIRKKA.

N6-acetyllysine is present on Lys-17.

Belongs to the histone-like Alba family. In terms of processing, acetylated. Acetylation at Lys-17 decreases DNA-binding affinity.

The protein localises to the cytoplasm. The protein resides in the chromosome. Functionally, binds double-stranded DNA tightly but without sequence specificity. Involved in DNA compaction. This Sulfurisphaera tokodaii (strain DSM 16993 / JCM 10545 / NBRC 100140 / 7) (Sulfolobus tokodaii) protein is DNA/RNA-binding protein Alba 1.